The chain runs to 360 residues: Putative F-box protein At5g55150 (360 aa).

Residues 6–54 (SSWSEFLPELLNTVFHNLNDARDILNCATVCSSWKDSSSAVYYSRTFSP) form the F-box domain.

This chain is Putative F-box protein At5g55150, found in Arabidopsis thaliana (Mouse-ear cress).